The primary structure comprises 293 residues: Lymphocyte antigen 6 complex locus protein G6f (293 aa).

The first 19 residues, 1–19 (MAMVVFLLLYLCGHPQAAA), serve as a signal peptide directing secretion. The Ig-like V-type domain maps to 20-124 (DNIQTLYVPS…HKYQNWRVYD (105 aa)). At 20 to 237 (DNIQTLYVPS…APLPSWDVSW (218 aa)) the chain is on the extracellular side. A disulfide bridge links Cys-37 with Cys-108. Asn-90 is a glycosylation site (N-linked (GlcNAc...) asparagine). Residues 238–258 (ILMLLFAAGQGVTIIALSIVI) traverse the membrane as a helical segment. Topologically, residues 259 to 293 (WRHQRAQGTQDREPSIPHFKPEVQVYENIHLARLR) are cytoplasmic. Position 284 is a phosphotyrosine (Tyr-284).

As to quaternary structure, homodimer; disulfide-linked. Interacts with GRB2 and GRB7 in a phosphorylation-dependent manner. In terms of processing, N-glycosylated.

Its subcellular location is the cell membrane. In terms of biological role, may play a role in the downstream signal transduction pathways involving GRB2 and GRB7. In Rattus norvegicus (Rat), this protein is Lymphocyte antigen 6 complex locus protein G6f (Ly6g6f).